A 312-amino-acid chain; its full sequence is MANRTVKDAHSIHGTNPQYLVEKIIRTRIYESKYWKEECFGLTAELVVDKAMELKFVGGVYGGNIKPTPFLCLTLKMLQIQPEKDIIVEFIKNEDFKYVRMLGALYMRLTGTAIDCYKYLEPLYNDYRKIKSQNRNGEFVLMHVDEFIYELLHSERVCDIILPRLQKRYVLEEAEQLEPRVSALEEDMDDVESSEEEEEEDEKLERVPSPDHRRRSYRDLDKPRRSPALRYRRSRSRSPRRRSRSPKRRSPSPRRERHRSKSPRRHRSRSRDRRHRSRSKSPGHHRSHRHRSHSKSPERSKKSHKKSRRGNE.

Positions 1-179 are N-terminal protein interaction domain; it reads MANRTVKDAH…VLEEAEQLEP (179 aa). Residues Ser-11, Ser-193, Ser-194, Ser-209, and Ser-226 each carry the phosphoserine modification. A coiled-coil region spans residues 170-204; that stretch reads VLEEAEQLEPRVSALEEDMDDVESSEEEEEEDEKL. The segment at 181–312 is disordered; that stretch reads VSALEEDMDD…SHKKSRRGNE (132 aa). Over residues 184–202 the composition is skewed to acidic residues; sequence LEEDMDDVESSEEEEEEDE. Over residues 203–224 the composition is skewed to basic and acidic residues; that stretch reads KLERVPSPDHRRRSYRDLDKPR. Basic residues-rich tracts occupy residues 225–294 and 301–312; these read RSPA…RSHS and KKSHKKSRRGNE.

The protein belongs to the PRP38 family. Component of the spliceosome B complex. Interacts (via N-terminal interaction domain) with ZMAT2 and MFAP1.

It is found in the nucleus. Its function is as follows. Involved in pre-mRNA splicing as a component of the spliceosome. The polypeptide is Pre-mRNA-splicing factor 38A (Prpf38a) (Mus musculus (Mouse)).